The chain runs to 100 residues: Small ribosomal subunit protein uS14c (100 aa).

This sequence belongs to the universal ribosomal protein uS14 family. In terms of assembly, part of the 30S ribosomal subunit.

It is found in the plastid. It localises to the chloroplast. Its function is as follows. Binds 16S rRNA, required for the assembly of 30S particles. This chain is Small ribosomal subunit protein uS14c, found in Rhodomonas salina (Cryptomonas salina).